The following is a 621-amino-acid chain: MIATGGLLRISARKQDPLRPPSQIPKRKRKAKKRRKNDVVVVKGKLKLCSISGLIALCGILVLLVGIAMAVVGYWPKATGTNREGGKQLPPAGSSHRVPTTANSSSSGSKNRSRSHPRAPGGVNSSSAGAPRSTPPARAASPSSSSTSVGFFFRIFSGYLHSDKLKVFGPLIMGIGIFLFICANAVLHENRDKKTKIINLRDLYSTVIDVHSLRAKDLAAAAAAAAAAAASSSSSAPAAAPPGAIPLNGFLSYVQSRGLELKPGGCGGSGDAFGAAAMLAKGSWPPHPAAPSGGRPRGAASPPDLASSPRCPREPPSLAEAVYSVYRERSGVAGSRRAAAATAAAAASSCSSPAPCSPPESWGRQSTASSFVDSSLSAFALLPLQGGRDRGGDAEGASCSWQRPPGERGSQEIPRGELDLSMTNLRGAEGSMRGARREPEEPEGAVAARAARGQGGRLPRTGRYAALRRRSTSGLPDYRAPPSPEPPPSPGSADPDSSPLAKAASPSPPLRLEGSPPTRRDSGSSQSDDPSSSNKGYTPLREAGTSTESVLDAVAGQTRDSAVAAPVLGAEQSSPEGASQEPPTAEQPQPVQRQFTNKEKLIMISRSHAIGVEEELESTGI.

The disordered stretch occupies residues 12-37 (ARKQDPLRPPSQIPKRKRKAKKRRKN). Residues 25–36 (PKRKRKAKKRRK) show a composition bias toward basic residues. The chain crosses the membrane as a helical span at residues 53-73 (GLIALCGILVLLVGIAMAVVG). Residues 80 to 147 (GTNREGGKQL…RAASPSSSST (68 aa)) are disordered. The segment covering 125 to 147 (SSSAGAPRSTPPARAASPSSSST) has biased composition (low complexity). A helical membrane pass occupies residues 167 to 187 (VFGPLIMGIGIFLFICANAVL). Disordered stretches follow at residues 284 to 315 (WPPHPAAPSGGRPRGAASPPDLASSPRCPREP), 347 to 368 (ASSCSSPAPCSPPESWGRQSTA), and 384 to 598 (LQGG…FTNK). Residues 290-303 (APSGGRPRGAASPP) show a composition bias toward low complexity. Positions 405–418 (PGERGSQEIPRGEL) are enriched in basic and acidic residues. Residues 479–490 (RAPPSPEPPPSP) are compositionally biased toward pro residues. Low complexity-rich tracts occupy residues 491–505 (GSADPDSSPLAKAAS) and 523–533 (GSSQSDDPSSS). Over residues 586–595 (EQPQPVQRQF) the composition is skewed to polar residues.

It belongs to the TMEM200 family.

The protein localises to the membrane. This chain is Transmembrane protein 200C (TMEM200C), found in Homo sapiens (Human).